A 278-amino-acid polypeptide reads, in one-letter code: Undecaprenyl-diphosphatase (278 aa).

8 consecutive transmembrane segments (helical) span residues 2–22 (ALVE…TEWL), 44–64 (AFME…VVLL), 85–105 (IEMW…GLLW), 113–133 (FYNY…FIVI), 150–170 (ITYT…IFPG), 189–209 (TVAA…ASAL), 223–243 (LMIL…SIKF), and 253–273 (FKIF…YFSA).

Belongs to the UppP family.

It localises to the cell membrane. It catalyses the reaction di-trans,octa-cis-undecaprenyl diphosphate + H2O = di-trans,octa-cis-undecaprenyl phosphate + phosphate + H(+). Its function is as follows. Catalyzes the dephosphorylation of undecaprenyl diphosphate (UPP). Confers resistance to bacitracin. The protein is Undecaprenyl-diphosphatase of Desulfitobacterium hafniense (strain DSM 10664 / DCB-2).